The primary structure comprises 270 residues: Probable septum site-determining protein MinC (270 aa).

Residues Asp-105 to Ala-129 form a disordered region. The span at Glu-116–Ala-129 shows a compositional bias: low complexity.

This sequence belongs to the MinC family. As to quaternary structure, interacts with MinD and FtsZ.

In terms of biological role, cell division inhibitor that blocks the formation of polar Z ring septums. Rapidly oscillates between the poles of the cell to destabilize FtsZ filaments that have formed before they mature into polar Z rings. Prevents FtsZ polymerization. This is Probable septum site-determining protein MinC from Burkholderia mallei (strain NCTC 10247).